A 179-amino-acid chain; its full sequence is MTLNSSHTDAGGLSHSIAVYTGSFDPVTLGHLHIIERASKLFDTLVVGIGINADKKSLFNPEERIELVQTISNHLPNVRVQTFDGLAVDFVRSLGAGVMVRGIRPLTDIAGEFTMMMANRQLDADIETVFLMADERFAHVSSSLLKQIAALSENDDHLAKFVPRPIIPSLRAKLAAPSV.

Ser23 is a substrate binding site. ATP-binding positions include 23-24 and His31; that span reads SF. Substrate contacts are provided by Lys55, Ala87, and Arg101. ATP-binding positions include 102-104, Glu112, and 137-143; these read GIR and FAHVSSS.

It belongs to the bacterial CoaD family. In terms of assembly, homohexamer. The cofactor is Mg(2+).

The protein localises to the cytoplasm. It carries out the reaction (R)-4'-phosphopantetheine + ATP + H(+) = 3'-dephospho-CoA + diphosphate. It functions in the pathway cofactor biosynthesis; coenzyme A biosynthesis; CoA from (R)-pantothenate: step 4/5. In terms of biological role, reversibly transfers an adenylyl group from ATP to 4'-phosphopantetheine, yielding dephospho-CoA (dPCoA) and pyrophosphate. The chain is Phosphopantetheine adenylyltransferase from Rhodopirellula baltica (strain DSM 10527 / NCIMB 13988 / SH1).